The sequence spans 1010 residues: Protein translocase subunit SecA (1010 aa).

ATP is bound by residues Gln-86, 104-108, and Asp-535; that span reads GEGKT. Residues 893–904 show a composition bias toward low complexity; sequence QAGAADGNAKGA. A disordered region spans residues 893–916; the sequence is QAGAADGNAKGARTVRHSVRLPGR. The Zn(2+) site is built by Cys-920, Cys-922, Cys-931, and His-932. Residues 950–981 are compositionally biased toward low complexity; it reads QHAAVAADTPAQPAPQATATRPPTSQVPRGRA. Residues 950-1010 are disordered; that stretch reads QHAAVAADTP…RGKGASARKK (61 aa).

The protein belongs to the SecA family. As to quaternary structure, monomer and homodimer. Part of the essential Sec protein translocation apparatus which comprises SecA, SecYEG and auxiliary proteins SecDF. Other proteins may also be involved. Zn(2+) serves as cofactor.

The protein resides in the cell membrane. It localises to the cytoplasm. The enzyme catalyses ATP + H2O + cellular proteinSide 1 = ADP + phosphate + cellular proteinSide 2.. Functionally, part of the Sec protein translocase complex. Interacts with the SecYEG preprotein conducting channel. Has a central role in coupling the hydrolysis of ATP to the transfer of proteins into and across the cell membrane, serving as an ATP-driven molecular motor driving the stepwise translocation of polypeptide chains across the membrane. The protein is Protein translocase subunit SecA of Roseiflexus sp. (strain RS-1).